The sequence spans 211 residues: Uracil phosphoribosyltransferase (211 aa).

Residues arginine 79, arginine 104, and 131–139 contribute to the 5-phospho-alpha-D-ribose 1-diphosphate site; that span reads DPMLATGGS. Uracil contacts are provided by residues isoleucine 196 and 201–203; that span reads GDA. Aspartate 202 lines the 5-phospho-alpha-D-ribose 1-diphosphate pocket.

This sequence belongs to the UPRTase family. It depends on Mg(2+) as a cofactor.

The catalysed reaction is UMP + diphosphate = 5-phospho-alpha-D-ribose 1-diphosphate + uracil. It functions in the pathway pyrimidine metabolism; UMP biosynthesis via salvage pathway; UMP from uracil: step 1/1. With respect to regulation, allosterically activated by GTP. Its function is as follows. Catalyzes the conversion of uracil and 5-phospho-alpha-D-ribose 1-diphosphate (PRPP) to UMP and diphosphate. The chain is Uracil phosphoribosyltransferase from Limosilactobacillus fermentum (strain NBRC 3956 / LMG 18251) (Lactobacillus fermentum).